Reading from the N-terminus, the 329-residue chain is Probable carboxylesterase 8 (329 aa).

Residues 73–75 carry the Involved in the stabilization of the negatively charged intermediate by the formation of the oxyanion hole motif; that stretch reads HGG. Active-site residues include Ser-161, Asp-264, and His-294.

It belongs to the 'GDXG' lipolytic enzyme family. As to expression, expressed in leaves, stems, flowers and siliques.

The enzyme catalyses a carboxylic ester + H2O = an alcohol + a carboxylate + H(+). In terms of biological role, carboxylesterase acting on esters with varying acyl chain length. The protein is Probable carboxylesterase 8 (CXE8) of Arabidopsis thaliana (Mouse-ear cress).